Here is a 254-residue protein sequence, read N- to C-terminus: Probable phosphatase Sbal_1472 (254 aa).

Zn(2+)-binding residues include H8, H10, H16, H41, E74, H102, H132, D193, and H195.

The protein belongs to the PHP family. The cofactor is Zn(2+).

This chain is Probable phosphatase Sbal_1472, found in Shewanella baltica (strain OS155 / ATCC BAA-1091).